Here is a 516-residue protein sequence, read N- to C-terminus: Lysophosphatidylcholine acyltransferase 2B (516 aa).

Asn-28 carries an N-linked (GlcNAc...) asparagine glycan. Helical transmembrane passes span 44–64 (THLS…LVPV), 68–88 (CIVF…INLP), and 102–122 (LIKS…GFLV). The HXXXXD motif motif lies at 142–147 (HSTFFD). EF-hand domains follow at residues 387-422 (PISE…LCNP) and 424-459 (NTEK…AFGV). The Ca(2+) site is built by Asp-400, Asn-402, Asp-404, Thr-406, Glu-411, Asp-437, Asp-439, Asp-441, Tyr-443, and Glu-448.

The protein belongs to the 1-acyl-sn-glycerol-3-phosphate acyltransferase family.

The protein resides in the membrane. The protein operates within lipid metabolism; phospholipid metabolism. Probable acetyltransferase. This Mus musculus (Mouse) protein is Lysophosphatidylcholine acyltransferase 2B (Lpcat2b).